Here is a 293-residue protein sequence, read N- to C-terminus: Diaminopimelate epimerase (293 aa).

3 residues coordinate substrate: Asn-17, Gln-47, and Asn-67. Cys-76 functions as the Proton donor in the catalytic mechanism. Residues 77 to 78 (GN), Asn-164, Asn-197, and 215 to 216 (ER) contribute to the substrate site. The active-site Proton acceptor is Cys-224. Substrate is bound at residue 225 to 226 (GS).

It belongs to the diaminopimelate epimerase family. In terms of assembly, homodimer.

It localises to the cytoplasm. The enzyme catalyses (2S,6S)-2,6-diaminopimelate = meso-2,6-diaminopimelate. It functions in the pathway amino-acid biosynthesis; L-lysine biosynthesis via DAP pathway; DL-2,6-diaminopimelate from LL-2,6-diaminopimelate: step 1/1. Functionally, catalyzes the stereoinversion of LL-2,6-diaminopimelate (L,L-DAP) to meso-diaminopimelate (meso-DAP), a precursor of L-lysine and an essential component of the bacterial peptidoglycan. This Rhodopseudomonas palustris (strain BisB5) protein is Diaminopimelate epimerase.